Here is a 262-residue protein sequence, read N- to C-terminus: Acetaldehyde dehydrogenase 7 (262 aa).

Position 10-13 (10-13 (SGNI)) interacts with NAD(+). Cys-128 (acyl-thioester intermediate) is an active-site residue. 159–167 (SAGPGTRAN) contributes to the NAD(+) binding site.

The protein belongs to the acetaldehyde dehydrogenase family.

The enzyme catalyses acetaldehyde + NAD(+) + CoA = acetyl-CoA + NADH + H(+). This chain is Acetaldehyde dehydrogenase 7, found in Rhodococcus jostii (strain RHA1).